Consider the following 306-residue polypeptide: Mitochondrial glycine transporter (306 aa).

3 Solcar repeats span residues 25-114 (QPVI…LKQY), 121-205 (PTAL…TKNV), and 217-301 (LVPV…MMAK). A run of 6 helical transmembrane segments spans residues 31-56 (FLCG…TRLQ), 89-115 (GMSP…KQYF), 127-152 (VILG…TRYE), 180-203 (GLTA…SQTK), 221-247 (VNFS…KTHM), and 276-294 (GSVP…AWTV).

The protein belongs to the mitochondrial carrier (TC 2.A.29) family. SLC25A38 subfamily.

The protein resides in the mitochondrion inner membrane. The enzyme catalyses glycine(in) = glycine(out). Its function is as follows. Mitochondrial glycine transporter that imports glycine into the mitochondrial matrix. Plays an important role in providing glycine for the first enzymatic step in heme biosynthesis, the condensation of glycine with succinyl-CoA to produce 5-aminolevulinate (ALA) in the mitochondrial matrix. Required during erythropoiesis. Functionally, plays a role as pro-apoptotic protein that induces caspase-dependent apoptosis. The protein is Mitochondrial glycine transporter of Ovis aries (Sheep).